The following is a 404-amino-acid chain: Probable tRNA sulfurtransferase (404 aa).

In terms of domain architecture, THUMP spans 60–165 (TAVAESLKQV…EEAAYLSYET (106 aa)). ATP contacts are provided by residues 183–184 (ML), 208–209 (HF), Arg-265, Gly-287, and Gln-296.

Belongs to the ThiI family.

The protein resides in the cytoplasm. The enzyme catalyses [ThiI sulfur-carrier protein]-S-sulfanyl-L-cysteine + a uridine in tRNA + 2 reduced [2Fe-2S]-[ferredoxin] + ATP + H(+) = [ThiI sulfur-carrier protein]-L-cysteine + a 4-thiouridine in tRNA + 2 oxidized [2Fe-2S]-[ferredoxin] + AMP + diphosphate. The catalysed reaction is [ThiS sulfur-carrier protein]-C-terminal Gly-Gly-AMP + S-sulfanyl-L-cysteinyl-[cysteine desulfurase] + AH2 = [ThiS sulfur-carrier protein]-C-terminal-Gly-aminoethanethioate + L-cysteinyl-[cysteine desulfurase] + A + AMP + 2 H(+). Its pathway is cofactor biosynthesis; thiamine diphosphate biosynthesis. Catalyzes the ATP-dependent transfer of a sulfur to tRNA to produce 4-thiouridine in position 8 of tRNAs, which functions as a near-UV photosensor. Also catalyzes the transfer of sulfur to the sulfur carrier protein ThiS, forming ThiS-thiocarboxylate. This is a step in the synthesis of thiazole, in the thiamine biosynthesis pathway. The sulfur is donated as persulfide by IscS. The sequence is that of Probable tRNA sulfurtransferase from Streptococcus pneumoniae (strain 70585).